The chain runs to 229 residues: 7-cyano-7-deazaguanine synthase (229 aa).

An ATP-binding site is contributed by 12–22 (LSGGMDSCVCA). 4 residues coordinate Zn(2+): cysteine 194, cysteine 202, cysteine 205, and cysteine 208.

Belongs to the QueC family. It depends on Zn(2+) as a cofactor.

The catalysed reaction is 7-carboxy-7-deazaguanine + NH4(+) + ATP = 7-cyano-7-deazaguanine + ADP + phosphate + H2O + H(+). It functions in the pathway purine metabolism; 7-cyano-7-deazaguanine biosynthesis. Its function is as follows. Catalyzes the ATP-dependent conversion of 7-carboxy-7-deazaguanine (CDG) to 7-cyano-7-deazaguanine (preQ(0)). This chain is 7-cyano-7-deazaguanine synthase, found in Acidobacterium capsulatum (strain ATCC 51196 / DSM 11244 / BCRC 80197 / JCM 7670 / NBRC 15755 / NCIMB 13165 / 161).